Consider the following 209-residue polypeptide: Uridine kinase (209 aa).

Residue 12 to 19 (GGSGSGKT) coordinates ATP.

This sequence belongs to the uridine kinase family.

Its subcellular location is the cytoplasm. It catalyses the reaction uridine + ATP = UMP + ADP + H(+). The catalysed reaction is cytidine + ATP = CMP + ADP + H(+). It participates in pyrimidine metabolism; CTP biosynthesis via salvage pathway; CTP from cytidine: step 1/3. It functions in the pathway pyrimidine metabolism; UMP biosynthesis via salvage pathway; UMP from uridine: step 1/1. The polypeptide is Uridine kinase (Listeria innocua serovar 6a (strain ATCC BAA-680 / CLIP 11262)).